The sequence spans 1047 residues: Atrial natriuretic peptide receptor 2 (1047 aa).

An N-terminal signal peptide occupies residues 1 to 16 (MALPSLLLVVAALAGG). Over 17 to 458 (VRPPGARNLT…DKTPLSTLAI (442 aa)) the chain is Extracellular. Residues Asn24 and Asn35 are each glycosylated (N-linked (GlcNAc...) asparagine). A disulfide bridge connects residues Cys75 and Cys101. N-linked (GlcNAc...) asparagine glycans are attached at residues Asn161, Asn195, Asn244, Asn277, and Asn349. Residues 459–478 (VALGTGVTFIMFGVSSFLIF) form a helical membrane-spanning segment. Residues 479-1047 (RKLMLEKELA…GEQKGPPGLL (569 aa)) are Cytoplasmic-facing. At Ser513 the chain carries Phosphoserine. Residues 513–786 (SRLTLSLRGS…PDFGQIKGFI (274 aa)) enclose the Protein kinase domain. Thr516 bears the Phosphothreonine mark. A phosphoserine mark is found at Ser518, Ser522, Ser523, and Ser526. Thr529 bears the Phosphothreonine mark. Residues 861–991 (TIYFSDIVGF…DTVNTASRME (131 aa)) enclose the Guanylate cyclase domain.

Belongs to the adenylyl cyclase class-4/guanylyl cyclase family. Post-translationally, phosphorylated. Phosphorylation of the protein kinase-like domain is required for full activation by CNP. In terms of processing, glycosylated. Widely expressed. Expressed in the columnar proliferating and prehypertrophic chondrocyte layers of the tibia.

It localises to the cell membrane. The catalysed reaction is GTP = 3',5'-cyclic GMP + diphosphate. In terms of biological role, receptor for the C-type natriuretic peptide NPPC/CNP hormone. Has guanylate cyclase activity upon binding of its ligand. May play a role in the regulation of skeletal growth. This Mus musculus (Mouse) protein is Atrial natriuretic peptide receptor 2 (Npr2).